A 304-amino-acid polypeptide reads, in one-letter code: Caspase-6 (304 aa).

Positions 1 to 29 (MSGAERRPAAGRVQLDSKPTPTTTADGNQ) are disordered. Positions 1–35 (MSGAERRPAAGRVQLDSKPTPTTTADGNQNITEVD) are excised as a propeptide. A compositionally biased stretch (polar residues) spans 17–29 (SKPTPTTTADGNQ). The segment at 54–56 (QRR) is tri-arginine exosite. The active site involves H133. Positions 137 to 154 (DHVYAYDAQIKIETITNM) are 130's region. C175 is an active-site residue. Positions 192 to 204 (SKDETTVNQTEVD) are excised as a propeptide.

This sequence belongs to the peptidase C14A family. As to quaternary structure, heterotetramer that consists of two anti-parallel arranged heterodimers, each one formed by a 18 kDa (p18) and a 11 kDa (p11) subunit. In terms of assembly, heterotetramer that consists of two anti-parallel arranged heterodimers, each one formed by a 18 kDa (Caspase-6 subunit p18) and a 11 kDa (Caspase-6 subunit p11) subunit. In terms of tissue distribution, widely expressed.

Its subcellular location is the cytoplasm. The protein localises to the nucleus. It catalyses the reaction Strict requirement for Asp at position P1 and has a preferred cleavage sequence of Val-Glu-His-Asp-|-.. During activation, the N-terminal prodomain is removed by cleavage. Concomitantly, double cleavage gives rise to a large 18-kDa and a small 11-kDa subunit. The two large and two small subunits then assemble to form the active CASP6 complex. Intramolecular cleavage at Asp-191 is a prerequisite for CASP6 self-activation. Its function is as follows. Cysteine protease that plays essential roles in programmed cell death, development and innate immunity. Acts as a non-canonical executioner caspase during apoptosis: localizes in the nucleus and cleaves the nuclear structural protein lamin-A/LMNA thereby inducing nuclear shrinkage and fragmentation. Lamin-A/LMNA cleavage is required for chromatin condensation and nuclear disassembly during apoptotic execution. Plays an essential role in defense against viruses by acting as a central mediator of the ZBP1-mediated pyroptosis, apoptosis, and necroptosis (PANoptosis), independently of its cysteine protease activity. PANoptosis is a unique inflammatory programmed cell death, which provides a molecular scaffold that allows the interactions and activation of machinery required for inflammasome/pyroptosis, apoptosis and necroptosis. The protein is Caspase-6 of Gallus gallus (Chicken).